We begin with the raw amino-acid sequence, 284 residues long: 3-methyl-2-oxobutanoate hydroxymethyltransferase 2 (284 aa).

Mg(2+) is bound by residues Asp49 and Asp88. 3-methyl-2-oxobutanoate-binding positions include 49–50 (DS), Asp88, and Lys118. Glu120 contributes to the Mg(2+) binding site. Glu187 serves as the catalytic Proton acceptor.

This sequence belongs to the PanB family. In terms of assembly, homodecamer; pentamer of dimers. The cofactor is Mg(2+).

The protein resides in the cytoplasm. It carries out the reaction 3-methyl-2-oxobutanoate + (6R)-5,10-methylene-5,6,7,8-tetrahydrofolate + H2O = 2-dehydropantoate + (6S)-5,6,7,8-tetrahydrofolate. The protein operates within cofactor biosynthesis; (R)-pantothenate biosynthesis; (R)-pantoate from 3-methyl-2-oxobutanoate: step 1/2. In terms of biological role, catalyzes the reversible reaction in which hydroxymethyl group from 5,10-methylenetetrahydrofolate is transferred onto alpha-ketoisovalerate to form ketopantoate. The sequence is that of 3-methyl-2-oxobutanoate hydroxymethyltransferase 2 from Burkholderia cenocepacia (strain HI2424).